A 67-amino-acid polypeptide reads, in one-letter code: Alpha-like toxin Lqh3 (67 aa).

One can recognise an LCN-type CS-alpha/beta domain in the interval 2–66 (RDGYIAQPEN…GIIVEGEKCH (65 aa)). Intrachain disulfides connect cysteine 12–cysteine 65, cysteine 16–cysteine 37, cysteine 23–cysteine 47, and cysteine 27–cysteine 49. A Serine amide modification is found at serine 67.

The protein belongs to the long (4 C-C) scorpion toxin superfamily. Sodium channel inhibitor family. Alpha subfamily. Monomer. Expressed by the venom gland.

The protein resides in the secreted. In terms of biological role, alpha toxins bind voltage-independently at site-3 of sodium channels (Nav) and inhibit the inactivation of the activated channels, thereby blocking neuronal transmission. The dissociation is voltage-dependent. This alpha-like toxin is highly toxic to insects and competes with LqhaIT on binding to insect sodium channels. Differs from classical anti-mammalian alpha-toxins as it inhibits sodium channel inactivation in cell bodies of hippocampus brain neurons, on which the anti-mammalian Lqh2 is inactive, and is unable to affect Nav1.2 in the rat brain, on which Lqh2 is highly active. Moreover, its pharmacological properties are unique in that its binding affinity for insect channels drops &gt;30-fold at pH 8.5 versus pH 6.5, and its rate of association with receptor site-3 on both insect and mammalian sodium channels is 4-15-fold slower compared with LqhaIT and Lqh2. The chain is Alpha-like toxin Lqh3 from Leiurus hebraeus (Hebrew deathstalker scorpion).